The following is a 419-amino-acid chain: UDP-N-acetylglucosamine 1-carboxyvinyltransferase (419 aa).

22-23 (KN) lines the phosphoenolpyruvate pocket. UDP-N-acetyl-alpha-D-glucosamine is bound at residue R93. C117 functions as the Proton donor in the catalytic mechanism. C117 bears the 2-(S-cysteinyl)pyruvic acid O-phosphothioketal mark. UDP-N-acetyl-alpha-D-glucosamine contacts are provided by D307 and I329.

The protein belongs to the EPSP synthase family. MurA subfamily.

The protein localises to the cytoplasm. The enzyme catalyses phosphoenolpyruvate + UDP-N-acetyl-alpha-D-glucosamine = UDP-N-acetyl-3-O-(1-carboxyvinyl)-alpha-D-glucosamine + phosphate. The protein operates within cell wall biogenesis; peptidoglycan biosynthesis. Functionally, cell wall formation. Adds enolpyruvyl to UDP-N-acetylglucosamine. This is UDP-N-acetylglucosamine 1-carboxyvinyltransferase from Shewanella putrefaciens (strain CN-32 / ATCC BAA-453).